The following is a 52-amino-acid chain: Repressor-like protein SSo7c3 (52 aa).

In terms of domain architecture, SpoVT-AbrB spans 4–51 (EEVVKVSRNYQVTIPAKVRQKFPVKEGDLVKVIYDENGGVVKIQILDS).

The protein is Repressor-like protein SSo7c3 of Saccharolobus solfataricus (strain ATCC 35092 / DSM 1617 / JCM 11322 / P2) (Sulfolobus solfataricus).